We begin with the raw amino-acid sequence, 327 residues long: Phenylalanine--tRNA ligase alpha subunit (327 aa).

Glu-252 is a Mg(2+) binding site.

The protein belongs to the class-II aminoacyl-tRNA synthetase family. Phe-tRNA synthetase alpha subunit type 1 subfamily. Tetramer of two alpha and two beta subunits. Mg(2+) serves as cofactor.

It is found in the cytoplasm. The catalysed reaction is tRNA(Phe) + L-phenylalanine + ATP = L-phenylalanyl-tRNA(Phe) + AMP + diphosphate + H(+). This is Phenylalanine--tRNA ligase alpha subunit from Escherichia coli O139:H28 (strain E24377A / ETEC).